The following is a 90-amino-acid chain: Probable two-component-system connector protein YmgA (90 aa).

The span at 63-80 (SDSGGPNRRTATADNKSM) shows a compositional bias: polar residues. The segment at 63–90 (SDSGGPNRRTATADNKSMFNGKKINRIH) is disordered.

Functionally, probably a connector protein for RcsB/C regulation of biofilm formation, providing additional signal input into the two-component signaling pathway. May serve to stimulate biofilm maturation, probably via the Rcs phosphorelay. Mild overexpression at 16 degrees Celsius increases the production of colanic acid, an exopolysaccharide and matrix component, and reduces adhesive curli fimbriae expression. Both of these effects require RcsB. This is Probable two-component-system connector protein YmgA (ymgA) from Escherichia coli (strain K12).